A 1042-amino-acid chain; its full sequence is Putative type I restriction enzyme MjaIXP endonuclease subunit (1042 aa).

The Helicase ATP-binding domain maps to 323–487 (GETPEDRRIG…FLVFGDYISA (165 aa)). A DEAH box motif is present at residues 439–442 (DEAH). A Helicase C-terminal domain is found at 551–731 (LTEDYLSKVS…DIKVVIEEMK (181 aa)).

Belongs to the HsdR family. In terms of assembly, the type I restriction/modification system is composed of three polypeptides R, M and S.

The enzyme catalyses Endonucleolytic cleavage of DNA to give random double-stranded fragments with terminal 5'-phosphates, ATP is simultaneously hydrolyzed.. Its function is as follows. The restriction (R) subunit of a type I restriction enzyme that recognizes 5'-CCAN(5)GTR-3' and cleaves a random distance away. The R subunit is required for both nuclease and ATPase activities, but not for modification. After locating a non-methylated recognition site, the enzyme complex serves as a molecular motor that translocates DNA in an ATP-dependent manner until a collision occurs that triggers cleavage. The chain is Putative type I restriction enzyme MjaIXP endonuclease subunit from Methanocaldococcus jannaschii (strain ATCC 43067 / DSM 2661 / JAL-1 / JCM 10045 / NBRC 100440) (Methanococcus jannaschii).